A 558-amino-acid chain; its full sequence is MAELRSNMITQGIDRAPHRSLLRAAGVKEEDFGKPFIAVCNSYIDIVPGHVHLQEFGKIVKEAIREAGGVPFEFNTIGVDDGIAMGHIGMRYSLPSREIIADSVETVVSAHWFDGMVCIPNCDKITPGMLMAAMRINIPTIFVSGGPMAAGRTSDGRKISLSSVFEGVGAYQAGKIGESDLQELEQFGCPTCGSCSGMFTANSMNCLSEALGLALPGNGTILATSPERREFVRKSAAQLMETIKKDIKPRDIVTEKAIDNAFALDMALGGSTNTVLHTLALANEAGVEYSLERINEVAERVPHLSKLAPASDVFIEDLHEAGGVSAALNELAKKEGALHLDALTVTGRTLGETIAGHEVKDYDVIHPLDNPFTEKGGLAVLFGNLAPDGAIIKTGGVQDGITRHEGPAVVFDSQDAALEGIINRKVKEGDVVIIRYEGPKGGPGMPEMLAPTSQIVGMGLGPKVALITDGRFSGASRGLSIGHVSPEAAEGGPLAFVENGDHVIVDIEKRILDVQVPEEEWEKRKAEWKGFEPKVKTGYLARYSKLVTSANTGGIMKI.

Asp81 contributes to the Mg(2+) binding site. Cys122 provides a ligand contact to [2Fe-2S] cluster. Mg(2+) is bound by residues Asp123 and Lys124. Position 124 is an N6-carboxylysine (Lys124). Cys195 provides a ligand contact to [2Fe-2S] cluster. Residue Glu447 coordinates Mg(2+). The Proton acceptor role is filled by Ser473.

The protein belongs to the IlvD/Edd family. Homodimer. [2Fe-2S] cluster is required as a cofactor. Mg(2+) serves as cofactor.

It catalyses the reaction (2R)-2,3-dihydroxy-3-methylbutanoate = 3-methyl-2-oxobutanoate + H2O. The enzyme catalyses (2R,3R)-2,3-dihydroxy-3-methylpentanoate = (S)-3-methyl-2-oxopentanoate + H2O. It functions in the pathway amino-acid biosynthesis; L-isoleucine biosynthesis; L-isoleucine from 2-oxobutanoate: step 3/4. It participates in amino-acid biosynthesis; L-valine biosynthesis; L-valine from pyruvate: step 3/4. Functions in the biosynthesis of branched-chain amino acids. Catalyzes the dehydration of (2R,3R)-2,3-dihydroxy-3-methylpentanoate (2,3-dihydroxy-3-methylvalerate) into 2-oxo-3-methylpentanoate (2-oxo-3-methylvalerate) and of (2R)-2,3-dihydroxy-3-methylbutanoate (2,3-dihydroxyisovalerate) into 2-oxo-3-methylbutanoate (2-oxoisovalerate), the penultimate precursor to L-isoleucine and L-valine, respectively. The chain is Dihydroxy-acid dehydratase from Bacillus velezensis (strain DSM 23117 / BGSC 10A6 / LMG 26770 / FZB42) (Bacillus amyloliquefaciens subsp. plantarum).